The chain runs to 282 residues: MTLLDGKALSAKIKEELKEKNQFLKSKGIESCLAVILVGDNPASQTYVKSKAKACEECGIKSLVYHLNENTTQNELLALINTLNHDDSVHGILVQLPLPDHICKDLILESIISSKDVDGFHPINVGYLNLGLESGFLPCTPLGVMKLLKAYEIDLEGKDAVIIGASNIVGRPMATMLLNAGATVSVCHIKTKDLSLYTRQADLIIVAAGCVNLLRSDMVKEGVIVVDVGINRLESGKIVGDVDFEEVSKKSSYITPVPGGVGPMTIAMLLENTVKSAKNRLN.

NADP(+)-binding positions include 164–166 (GAS), isoleucine 189, and isoleucine 230.

This sequence belongs to the tetrahydrofolate dehydrogenase/cyclohydrolase family. Homodimer.

It catalyses the reaction (6R)-5,10-methylene-5,6,7,8-tetrahydrofolate + NADP(+) = (6R)-5,10-methenyltetrahydrofolate + NADPH. It carries out the reaction (6R)-5,10-methenyltetrahydrofolate + H2O = (6R)-10-formyltetrahydrofolate + H(+). Its pathway is one-carbon metabolism; tetrahydrofolate interconversion. Functionally, catalyzes the oxidation of 5,10-methylenetetrahydrofolate to 5,10-methenyltetrahydrofolate and then the hydrolysis of 5,10-methenyltetrahydrofolate to 10-formyltetrahydrofolate. The polypeptide is Bifunctional protein FolD (Campylobacter jejuni subsp. jejuni serotype O:6 (strain 81116 / NCTC 11828)).